A 593-amino-acid polypeptide reads, in one-letter code: Calnexin (593 aa).

An N-terminal signal peptide occupies residues 1-20 (MEGKWLLCMLLVLGTTIVQA). The Lumenal portion of the chain corresponds to 21-482 (HEGHDDDMID…QMIEAAEERP (462 aa)). Residues serine 75 and aspartate 118 each coordinate Ca(2+). An N6-acetyllysine modification is found at lysine 138. Cysteines 161 and 195 form a disulfide. Tyrosine 165, lysine 167, tyrosine 186, and aspartate 193 together coordinate an alpha-D-glucoside. The disordered stretch occupies residues 261 to 346 (GNLLNDMTPP…AEKPEDWDED (86 aa)). The tract at residues 277 to 410 (IEDPEDQKPE…RKIPNPDFFE (134 aa)) is p domain (Extended arm). Tandem repeats lie at residues 279–290 (DPEDQKPEDWDE), 296–307 (DPDAVKPDDWNE), 315–326 (DEEATKPDGWLD), 334–345 (DPDAEKPEDWDE), and 349–359 (GEWEAPQIANP). 4 X approximate repeats regions lie at residues 279–345 (DPED…DWDE) and 349–406 (GEWE…IPNP). A compositionally biased stretch (basic and acidic residues) spans 282–320 (DQKPEDWDERPKIPDPDAVKPDDWNEDAPAKIPDEEATK). The span at 324–346 (WLDDEPEYVPDPDAEKPEDWDED) shows a compositional bias: acidic residues. Residues 327-360 (DEPEYVPDPDAEKPEDWDEDMDGEWEAPQIANPK) form an interaction with PPIB region. An intrachain disulfide couples cysteine 361 to cysteine 367. 3 repeat units span residues 368 to 378 (GVWQRPMIDNP), 382 to 392 (GKWKPPMIDNP), and 396 to 406 (GIWKPRKIPNP). An alpha-D-glucoside is bound at residue glutamate 426. Aspartate 437 is a Ca(2+) binding site. The helical transmembrane segment at 483 to 503 (WLWVVYVLTVALPVFLVILFC) threads the bilayer. S-palmitoyl cysteine attachment occurs at residues cysteine 503 and cysteine 504. Over 504–593 (CSGKKQSSPV…SPRNRKPRRE (90 aa)) the chain is Cytoplasmic. The tract at residues 504 to 593 (CSGKKQSSPV…SPRNRKPRRE (90 aa)) is sufficient to mediate interaction with SGIP1. Residues 511-593 (SPVEYKKTDA…SPRNRKPRRE (83 aa)) form a disordered region. Over residues 526 to 548 (KEEEEEKEEEKDKGDEEEEGEEK) the composition is skewed to acidic residues. Serine 555 carries the post-translational modification Phosphoserine. Residue threonine 563 is modified to Phosphothreonine. At serine 565 the chain carries Phosphoserine; by MAPK3. The residue at position 584 (serine 584) is a Phosphoserine.

This sequence belongs to the calreticulin family. In terms of assembly, interacts with MAPK3/ERK1. Interacts with KCNH2. Associates with ribosomes. Interacts with SGIP1; involved in negative regulation of endocytosis. The palmitoylated form interacts with the ribosome-translocon complex component SSR1, promoting efficient folding of glycoproteins. Interacts with SERPINA2P/SERPINA2 and with the S and Z variants of SERPINA1. Interacts with PPIB. Interacts with ZNRF4. Interacts with SMIM22. Interacts with TMX2. Interacts with TMEM35A/NACHO and CHRNA7. Interacts with reticulophagy regulators RETREG2 and RETREG3. Interacts with DNM1L; may form part of a larger protein complex at the ER-mitochondrial interface during mitochondrial fission. Interacts with ADAM7. Post-translationally, phosphorylated at Ser-565 by MAPK3/ERK1. Phosphorylation by MAPK3/ERK1 increases its association with ribosomes. In terms of processing, palmitoylation by DHHC6 leads to the preferential localization to the perinuclear rough ER. It mediates the association of calnexin with the ribosome-translocon complex (RTC) which is required for efficient folding of glycosylated proteins. Ubiquitinated, leading to proteasomal degradation. Probably ubiquitinated by ZNRF4.

The protein resides in the endoplasmic reticulum membrane. It is found in the mitochondrion membrane. Its subcellular location is the melanosome membrane. Its function is as follows. Calcium-binding protein that interacts with newly synthesized monoglucosylated glycoproteins in the endoplasmic reticulum. It may act in assisting protein assembly and/or in the retention within the ER of unassembled protein subunits. It seems to play a major role in the quality control apparatus of the ER by the retention of incorrectly folded proteins. Associated with partial T-cell antigen receptor complexes that escape the ER of immature thymocytes, it may function as a signaling complex regulating thymocyte maturation. Additionally it may play a role in receptor-mediated endocytosis at the synapse. This chain is Calnexin (CANX), found in Canis lupus familiaris (Dog).